The primary structure comprises 169 residues: Large ribosomal subunit protein uL5 (169 aa).

The protein belongs to the universal ribosomal protein uL5 family. Part of the 50S ribosomal subunit; contacts the 5S rRNA and probably tRNA. Forms a bridge to the 30S subunit in the 70S ribosome.

Its function is as follows. This is one of the proteins that bind and probably mediate the attachment of the 5S RNA into the large ribosomal subunit, where it forms part of the central protuberance. In the 70S ribosome it contacts protein S13 of the 30S subunit (bridge B1b), connecting the 2 subunits; this bridge is implicated in subunit movement. May contact the P site tRNA; the 5S rRNA and some of its associated proteins might help stabilize positioning of ribosome-bound tRNAs. This chain is Large ribosomal subunit protein uL5, found in Nanoarchaeum equitans (strain Kin4-M).